We begin with the raw amino-acid sequence, 59 residues long: Crassipeptide cce9a (59 aa).

The propeptide occupies 1-30; the sequence is ADNHARVAGPRAVASGRYATEKAFLQMMTR.

Contains 3 disulfide bonds. Expressed by the venom duct.

Its subcellular location is the secreted. Its function is as follows. Crassispirid snail peptide that induces sleep-like symptoms in young mice (12 and 14 days) and hyperactivity in older mice (16 days), when intracranially injected. In Crassispira cerithina (Sea snail), this protein is Crassipeptide cce9a.